The sequence spans 329 residues: MALQFFSCKPKYTFLSSLLLLLLLSSSVAELSFNFYAGSCPGAELIVRNTVRSASSSDPSVLGKLLRLIFHDCFVQGCDGSVLIRGNGTERSDPGNASLGGFAVIESVKNILEIFCPGTVSCADILVLAARDAVEALGGPVVPIPTGRRDGRVSMAANVRPNIIDTDFTVDKMINIFSSKGLSVHDLVVLSGAHTIGAAHCNTFNSRFKLDPKGNLELIDASLDNSYAQTLVNKCSSSLDPTTTVVDNDPETSSTFDNQYYKNLLAHKGLFQTDSALMEDDRTRKIVEILANDQESFFDRWTESFLKMSLMGVRVGEEGEIRRSCSAVN.

A signal peptide spans 1-29 (MALQFFSCKPKYTFLSSLLLLLLLSSSVA). Cystine bridges form between cysteine 40-cysteine 116, cysteine 73-cysteine 78, cysteine 122-cysteine 325, and cysteine 201-cysteine 235. Catalysis depends on histidine 71, which acts as the Proton acceptor. Ca(2+) is bound by residues aspartate 72, valine 75, glycine 77, aspartate 79, and serine 81. Asparagine 87 is a glycosylation site (N-linked (GlcNAc...) asparagine). Isoleucine 164 contributes to the substrate binding site. Heme b is bound at residue histidine 194. Threonine 195 contributes to the Ca(2+) binding site. 3 residues coordinate Ca(2+): aspartate 249, threonine 252, and aspartate 257.

The protein belongs to the peroxidase family. Classical plant (class III) peroxidase subfamily. The cofactor is heme b. Ca(2+) serves as cofactor.

It is found in the secreted. It catalyses the reaction 2 a phenolic donor + H2O2 = 2 a phenolic radical donor + 2 H2O. Its function is as follows. Removal of H(2)O(2), oxidation of toxic reductants, biosynthesis and degradation of lignin, suberization, auxin catabolism, response to environmental stresses such as wounding, pathogen attack and oxidative stress. These functions might be dependent on each isozyme/isoform in each plant tissue. This is Peroxidase 18 (PER18) from Arabidopsis thaliana (Mouse-ear cress).